Consider the following 339-residue polypeptide: UDP-N-acetylenolpyruvoylglucosamine reductase (339 aa).

The FAD-binding PCMH-type domain occupies 19-189 (VDVQARLFAQ…LRVRFKLSRE (171 aa)). Residue Arg-166 is part of the active site. Ser-239 functions as the Proton donor in the catalytic mechanism. Glu-335 is a catalytic residue.

This sequence belongs to the MurB family. FAD serves as cofactor.

The protein resides in the cytoplasm. It carries out the reaction UDP-N-acetyl-alpha-D-muramate + NADP(+) = UDP-N-acetyl-3-O-(1-carboxyvinyl)-alpha-D-glucosamine + NADPH + H(+). It participates in cell wall biogenesis; peptidoglycan biosynthesis. In terms of biological role, cell wall formation. The polypeptide is UDP-N-acetylenolpyruvoylglucosamine reductase (Pseudomonas syringae pv. tomato (strain ATCC BAA-871 / DC3000)).